The sequence spans 460 residues: U-box domain-containing protein 9 (460 aa).

The 75-residue stretch at 73–147 (SCPEEFRCPL…SKWCKKNGLE (75 aa)) folds into the U-box domain. 3 ARM repeats span residues 201–244 (TEFR…NISI), 248–287 (SNKKLVCENPNVIPLLIDALRRGTVATRSNAAAAIFTLSA), and 289–328 (DSNKVLIGKSGILKPLIDLLEEGNPLAIKDVAAAIFTLCI).

As to quaternary structure, binds to SD11, SD16, SD17, SD18, SD113, SD129 and SD25. Post-translationally, phosphorylated by SD1-6 and SD1-7.

It localises to the nucleus. It is found in the cell membrane. The catalysed reaction is S-ubiquitinyl-[E2 ubiquitin-conjugating enzyme]-L-cysteine + [acceptor protein]-L-lysine = [E2 ubiquitin-conjugating enzyme]-L-cysteine + N(6)-ubiquitinyl-[acceptor protein]-L-lysine.. Its pathway is protein modification; protein ubiquitination. Functions as an E3 ubiquitin ligase. May be involved in the abscisic acid-mediated signaling pathway, at least during germination. In Arabidopsis thaliana (Mouse-ear cress), this protein is U-box domain-containing protein 9 (PUB9).